A 152-amino-acid chain; its full sequence is Small ribosomal subunit protein uS8m (152 aa).

It belongs to the universal ribosomal protein uS8 family.

It localises to the mitochondrion. This chain is Small ribosomal subunit protein uS8m (mrps8), found in Dictyostelium citrinum (Slime mold).